Reading from the N-terminus, the 150-residue chain is 3-hydroxyacyl-[acyl-carrier-protein] dehydratase FabZ (150 aa).

The active site involves histidine 54.

It belongs to the thioester dehydratase family. FabZ subfamily.

Its subcellular location is the cytoplasm. The catalysed reaction is a (3R)-hydroxyacyl-[ACP] = a (2E)-enoyl-[ACP] + H2O. Functionally, involved in unsaturated fatty acids biosynthesis. Catalyzes the dehydration of short chain beta-hydroxyacyl-ACPs and long chain saturated and unsaturated beta-hydroxyacyl-ACPs. This chain is 3-hydroxyacyl-[acyl-carrier-protein] dehydratase FabZ, found in Aliivibrio fischeri (strain ATCC 700601 / ES114) (Vibrio fischeri).